Here is a 212-residue protein sequence, read N- to C-terminus: Nitrogen regulatory protein P-II homolog (212 aa).

Composition is skewed to low complexity over residues methionine 1–alanine 12, threonine 32–arginine 46, and proline 63–alanine 74. The N-terminal 68 residues, methionine 1–arginine 68, are a transit peptide targeting the chloroplast. The disordered stretch occupies residues methionine 1–alanine 74. Residues glycine 117–glutamine 121 and glycine 170–lysine 173 each bind ATP. Glycine 119 contacts Mg(2+).

This sequence belongs to the P(II) protein family. Homodimer.

It localises to the plastid. It is found in the chloroplast. In terms of biological role, participates in sensing carbon and organic nitrogen status and regulates some steps of primary carbon and nitrogen metabolism. This chain is Nitrogen regulatory protein P-II homolog (GLB), found in Oryza sativa subsp. japonica (Rice).